Reading from the N-terminus, the 425-residue chain is Phosphomethylpyrimidine synthase (425 aa).

Residues M94, Y123, H162, 184-186 (SRG), 225-228 (NGMR), and E264 contribute to the substrate site. H268 contributes to the Zn(2+) binding site. Y291 serves as a coordination point for substrate. H332 is a binding site for Zn(2+). [4Fe-4S] cluster is bound by residues C407, C410, and C414.

This sequence belongs to the ThiC family. It depends on [4Fe-4S] cluster as a cofactor.

The enzyme catalyses 5-amino-1-(5-phospho-beta-D-ribosyl)imidazole + S-adenosyl-L-methionine = 4-amino-2-methyl-5-(phosphooxymethyl)pyrimidine + CO + 5'-deoxyadenosine + formate + L-methionine + 3 H(+). It functions in the pathway cofactor biosynthesis; thiamine diphosphate biosynthesis. In terms of biological role, catalyzes the synthesis of the hydroxymethylpyrimidine phosphate (HMP-P) moiety of thiamine from aminoimidazole ribotide (AIR) in a radical S-adenosyl-L-methionine (SAM)-dependent reaction. The chain is Phosphomethylpyrimidine synthase from Methanoregula boonei (strain DSM 21154 / JCM 14090 / 6A8).